A 432-amino-acid chain; its full sequence is UDP-N-acetylglucosamine 1-carboxyvinyltransferase (432 aa).

A phosphoenolpyruvate-binding site is contributed by 22-23 (KN). Arg96 provides a ligand contact to UDP-N-acetyl-alpha-D-glucosamine. The Proton donor role is filled by Cys120. Cys120 carries the post-translational modification 2-(S-cysteinyl)pyruvic acid O-phosphothioketal. Residues 125–129 (RPVDL), Asp310, and Ile332 each bind UDP-N-acetyl-alpha-D-glucosamine.

The protein belongs to the EPSP synthase family. MurA subfamily.

It localises to the cytoplasm. It catalyses the reaction phosphoenolpyruvate + UDP-N-acetyl-alpha-D-glucosamine = UDP-N-acetyl-3-O-(1-carboxyvinyl)-alpha-D-glucosamine + phosphate. Its pathway is cell wall biogenesis; peptidoglycan biosynthesis. Functionally, cell wall formation. Adds enolpyruvyl to UDP-N-acetylglucosamine. In Caulobacter sp. (strain K31), this protein is UDP-N-acetylglucosamine 1-carboxyvinyltransferase.